The chain runs to 278 residues: Myb/SANT-like DNA-binding domain-containing protein 1 (278 aa).

Positions 44–131 constitute a Myb-like domain; it reads RNWTDAEMRG…WPYYLAIDRI (88 aa). Residues 139–167 form a disordered region; sequence CEGKLPDGQQPGPSTSQTEASLSPSAKST. Positions 149–166 are enriched in polar residues; it reads PGPSTSQTEASLSPSAKS.

This Mus musculus (Mouse) protein is Myb/SANT-like DNA-binding domain-containing protein 1 (Msantd1).